The chain runs to 391 residues: S-adenosylmethionine synthase (391 aa).

His-14 contributes to the ATP binding site. Asp-16 is a Mg(2+) binding site. Residue Glu-42 participates in K(+) binding. Residues Glu-55 and Gln-98 each coordinate L-methionine. Residues 98 to 108 (QSADIAMGVDE) are flexible loop. Residues 172-174 (DGK), 238-239 (RF), Asp-247, 253-254 (RK), Ala-270, and Lys-274 each bind ATP. Asp-247 lines the L-methionine pocket. Lys-278 serves as a coordination point for L-methionine.

This sequence belongs to the AdoMet synthase family. As to quaternary structure, homotetramer; dimer of dimers. Mg(2+) serves as cofactor. Requires K(+) as cofactor.

The protein resides in the cytoplasm. The catalysed reaction is L-methionine + ATP + H2O = S-adenosyl-L-methionine + phosphate + diphosphate. Its pathway is amino-acid biosynthesis; S-adenosyl-L-methionine biosynthesis; S-adenosyl-L-methionine from L-methionine: step 1/1. Its function is as follows. Catalyzes the formation of S-adenosylmethionine (AdoMet) from methionine and ATP. The overall synthetic reaction is composed of two sequential steps, AdoMet formation and the subsequent tripolyphosphate hydrolysis which occurs prior to release of AdoMet from the enzyme. In Clostridium botulinum (strain Alaska E43 / Type E3), this protein is S-adenosylmethionine synthase.